Reading from the N-terminus, the 365-residue chain is U-box domain-containing protein 56 (365 aa).

A coiled-coil region spans residues 176 to 281; that stretch reads YEEQRRRLEI…ELLRALEKGE (106 aa). Residues 293–365 enclose the U-box domain; the sequence is EPPQCFICPI…AIKDWLQQHP (73 aa).

The catalysed reaction is S-ubiquitinyl-[E2 ubiquitin-conjugating enzyme]-L-cysteine + [acceptor protein]-L-lysine = [E2 ubiquitin-conjugating enzyme]-L-cysteine + N(6)-ubiquitinyl-[acceptor protein]-L-lysine.. Its pathway is protein modification; protein ubiquitination. Functionally, functions as an E3 ubiquitin ligase. This chain is U-box domain-containing protein 56 (PUB56), found in Arabidopsis thaliana (Mouse-ear cress).